Reading from the N-terminus, the 361-residue chain is Myb/SANT-like DNA-binding domain-containing protein 7 (361 aa).

The region spanning 11–70 (RWSRQETRTLLSILGEAEYIQRLQTVHHNADVYQAVSKRMQQEGFRRTERQCRSKFKVLK) is the Myb-like domain. Disordered regions lie at residues 174–198 (TSDL…SYSS) and 217–272 (RLGV…ARRR). Polar residues-rich tracts occupy residues 187 to 198 (AGCSQGTPSYSS) and 226 to 249 (PCTS…SSSR).

The protein is Myb/SANT-like DNA-binding domain-containing protein 7 of Homo sapiens (Human).